The sequence spans 339 residues: Heme A synthase (339 aa).

8 helical membrane passes run 7-27, 92-112, 126-146, 159-179, 199-219, 254-274, 291-311, and 312-332; these read VIIWLLSGCFLVFIMVVVGGI, HRFIGRIIGLVFIIPFIYFLI, ILLGMGAFQGFLGWFMVKSGL, LHLTFAFITFAYTLWVALDLI, AIIILQIIYGGFVAGLNAGLI, VQFVHRTIAYFVAGLIVFLTF, ALLIIVFIQFTLGVLTLLYSV, and PLWLGVIHQAMAFILLATTTY. A heme-binding site is contributed by His258. His319 provides a ligand contact to heme.

The protein belongs to the COX15/CtaA family. Type 2 subfamily. As to quaternary structure, interacts with CtaB. Heme b serves as cofactor.

The protein resides in the cell membrane. The catalysed reaction is Fe(II)-heme o + 2 A + H2O = Fe(II)-heme a + 2 AH2. The protein operates within porphyrin-containing compound metabolism; heme A biosynthesis; heme A from heme O: step 1/1. Its function is as follows. Catalyzes the conversion of heme O to heme A by two successive hydroxylations of the methyl group at C8. The first hydroxylation forms heme I, the second hydroxylation results in an unstable dihydroxymethyl group, which spontaneously dehydrates, resulting in the formyl group of heme A. This chain is Heme A synthase, found in Flavobacterium psychrophilum (strain ATCC 49511 / DSM 21280 / CIP 103535 / JIP02/86).